The chain runs to 389 residues: 8-amino-7-oxononanoate synthase (389 aa).

Position 31 (Arg-31) interacts with substrate. 109–110 (GY) contributes to the pyridoxal 5'-phosphate binding site. His-134 contacts substrate. Pyridoxal 5'-phosphate contacts are provided by residues Ser-180, 205-208 (DEAH), and 236-239 (TLSK). Lys-239 is subject to N6-(pyridoxal phosphate)lysine. Residue Thr-349 participates in substrate binding.

It belongs to the class-II pyridoxal-phosphate-dependent aminotransferase family. BioF subfamily. In terms of assembly, homodimer. Pyridoxal 5'-phosphate is required as a cofactor.

It catalyses the reaction 6-carboxyhexanoyl-[ACP] + L-alanine + H(+) = (8S)-8-amino-7-oxononanoate + holo-[ACP] + CO2. The protein operates within cofactor biosynthesis; biotin biosynthesis. Catalyzes the decarboxylative condensation of pimeloyl-[acyl-carrier protein] and L-alanine to produce 8-amino-7-oxononanoate (AON), [acyl-carrier protein], and carbon dioxide. In Mycobacterium marinum (strain ATCC BAA-535 / M), this protein is 8-amino-7-oxononanoate synthase.